Consider the following 162-residue polypeptide: Sorting nexin-3 (162 aa).

The interval 1–23 (MPREFKSFGSTEKSLLSKGHGEP) is disordered. Positions 38–161 (IEVHNPKTHI…VRFIEAEKFV (124 aa)) constitute a PX domain. The a 1,2-diacyl-sn-glycero-3-phospho-(1D-myo-inositol-3-phosphate) site is built by Arg-81, Ser-83, Lys-112, and Arg-127.

This sequence belongs to the sorting nexin family. Monomer. Interacts with RBD2, YIF1, YIP1 and YIP5.

The protein localises to the cytoplasm. It is found in the golgi apparatus membrane. The protein resides in the prevacuolar compartment membrane. In terms of biological role, required for retention of late Golgi membrane proteins. Component of the retrieval machinery that functions by direct interaction with the cytosolic tails of certain TGN membrane proteins during the sorting/budding process at the prevacuolar compartment. Binds phosphatidylinositol 3-phosphate (PtdIns(P3)). The protein is Sorting nexin-3 (SNX3) of Saccharomyces cerevisiae (strain ATCC 204508 / S288c) (Baker's yeast).